We begin with the raw amino-acid sequence, 440 residues long: MPTPSTFVDQTKIEVQAGKGGDGMVAFRHEKFMPNGGPAGGDGGRGGSIIFVADNGLRTLMDFRYRRKFKAEPGENGRIKAQYGKAAKDLYLKVPVGTTVYDFFTGEEIGDLVENGQELVVAKGGRGGRGNIHFATSVNTAPEIAENGEPGEFRTLRLELKVLADVGLVGFPSVGKSTLLSVVTSAKPKIAAYQFTTLKPNLGMVLLPDGRDFSMADLPGLIKGASQGVGLGIQFLRHVERTKVILHMVSMDPNNGRDAYEDYETILHELASYTEDDLSSKREIIVASQMDIPGADEKLAQFKKDLAAHGVDQEVYELSSVTHQGVDRLMSRAADLVSEVEAQEAEAAVKPKEEVKTKTYKYHRPEKMEFTVEKLADHEFEIHGEQLERLVAMTNLDHQDGIMRLARRLKKMGVDDELRAQGAVDGDDVYIGDFSFEFVQ.

Residues 5–163 (STFVDQTKIE…RTLRLELKVL (159 aa)) enclose the Obg domain. The OBG-type G domain maps to 164–338 (ADVGLVGFPS…LMSRAADLVS (175 aa)). GTP-binding positions include 170-177 (GFPSVGKS), 195-199 (FTTLK), 217-220 (DLPG), 288-291 (SQMD), and 319-321 (SSV). The Mg(2+) site is built by Ser-177 and Thr-197. The OCT domain maps to 362-440 (YHRPEKMEFT…IGDFSFEFVQ (79 aa)).

Belongs to the TRAFAC class OBG-HflX-like GTPase superfamily. OBG GTPase family. Monomer. Mg(2+) is required as a cofactor.

Its subcellular location is the cytoplasm. In terms of biological role, an essential GTPase which binds GTP, GDP and possibly (p)ppGpp with moderate affinity, with high nucleotide exchange rates and a fairly low GTP hydrolysis rate. Plays a role in control of the cell cycle, stress response, ribosome biogenesis and in those bacteria that undergo differentiation, in morphogenesis control. The protein is GTPase Obg of Lactobacillus delbrueckii subsp. bulgaricus (strain ATCC BAA-365 / Lb-18).